Consider the following 493-residue polypeptide: Probable GTP-binding protein OBGM, mitochondrial (493 aa).

The N-terminal 28 residues, 1–28 (MWLIRAIVPVRYLGSYKRPQKPPWMRNP), are a transit peptide targeting the mitochondrion. In terms of domain architecture, Obg spans 48 to 303 (TRMRDRFTLY…AVLILELKSI (256 aa)). Disordered stretches follow at residues 65–89 (SGCS…GGRG) and 146–215 (GEIP…EDDD). Acidic residues predominate over residues 187–196 (SESDQDDTEQ). The region spanning 304–476 (ADVGLVGMPN…LKDGLKMLVD (173 aa)) is the OBG-type G domain. GTP contacts are provided by residues 310-317 (GMPNAGKS) and 356-360 (DIPGL).

It belongs to the TRAFAC class OBG-HflX-like GTPase superfamily. OBG GTPase family.

It localises to the mitochondrion. Functionally, may bind GTP and have GTPase activity. The sequence is that of Probable GTP-binding protein OBGM, mitochondrial (ATOBGM) from Arabidopsis thaliana (Mouse-ear cress).